The primary structure comprises 42 residues: Protein YkgS (42 aa).

In Escherichia coli (strain K12), this protein is Protein YkgS (ykgS).